A 535-amino-acid polypeptide reads, in one-letter code: Probable fucosyltransferase 4 (535 aa).

Residues Met-1–Lys-20 lie on the Cytoplasmic side of the membrane. Residues Ile-21–Ser-41 traverse the membrane as a helical; Signal-anchor for type II membrane protein segment. Residues Asn-42–Leu-535 lie on the Lumenal side of the membrane. Asn-136, Asn-226, Asn-230, Asn-377, and Asn-409 each carry an N-linked (GlcNAc...) asparagine glycan.

Belongs to the glycosyltransferase 37 family. In terms of tissue distribution, expressed in roots, stems, leaves, flowers, siliques and seedlings.

It is found in the golgi apparatus. The protein localises to the golgi stack membrane. It functions in the pathway protein modification; protein glycosylation. In terms of biological role, may be involved in cell wall biosynthesis. May act as a fucosyltransferase. In Arabidopsis thaliana (Mouse-ear cress), this protein is Probable fucosyltransferase 4 (FUT4).